The sequence spans 895 residues: Catenin alpha-3 (895 aa).

The stretch at 74–107 (EMIAKEATVLKEELAAALQEVRKESKALKVSAER) forms a coiled coil. Phosphoserine is present on Ser-160. Residues 325 to 379 (RERIIAECNAIRQALQDLLTEYMSNTGKTERSNTLNTAIVNMSKKTRDLRRQLRK) are a coiled coil. Thr-361 carries the post-translational modification Phosphothreonine. The segment at 635-660 (DVSDLEDDHEVRSHTSIQTEGKTDRA) is disordered. Residues Ser-637 and Ser-647 each carry the phosphoserine modification. A Phosphothreonine modification is found at Thr-649.

It belongs to the vinculin/alpha-catenin family. Interacts with CTNNB1. Interacts with PKP2. In terms of tissue distribution, expressed in heart (at protein level).

The protein resides in the cytoplasm. It localises to the cytoskeleton. It is found in the cell junction. The protein localises to the desmosome. May be involved in formation of stretch-resistant cell-cell adhesion complexes. In Mus musculus (Mouse), this protein is Catenin alpha-3.